Consider the following 307-residue polypeptide: 2-dehydropantoate 2-reductase (307 aa).

Residues 7 to 12 (GSGAMG), Asn102, and Ala128 each bind NADP(+). Position 102 (Asn102) interacts with substrate. Lys184 functions as the Proton donor in the catalytic mechanism. Residues Asn188, Asn192, and Ser255 each coordinate substrate. Glu268 contacts NADP(+).

It belongs to the ketopantoate reductase family.

It is found in the cytoplasm. The catalysed reaction is (R)-pantoate + NADP(+) = 2-dehydropantoate + NADPH + H(+). Its pathway is cofactor biosynthesis; (R)-pantothenate biosynthesis; (R)-pantoate from 3-methyl-2-oxobutanoate: step 2/2. In terms of biological role, catalyzes the NADPH-dependent reduction of ketopantoate into pantoic acid. The sequence is that of 2-dehydropantoate 2-reductase (apbA) from Streptococcus pyogenes serotype M18 (strain MGAS8232).